The following is a 425-amino-acid chain: Stabilizer of axonemal microtubules 4 (425 aa).

Disordered regions lie at residues 93 to 126 (PLEVPDGKHPLPWSMRQTSSGYGREKPSAGPPTK), 203 to 225 (EGSGFTKQSHQSPIVFQPPSQAL), and 316 to 335 (KEPTGFSLNNPMYVRSPCDP). The segment covering 207-222 (FTKQSHQSPIVFQPPS) has biased composition (polar residues).

Microtubule inner protein component of sperm flagellar doublet microtubules. Interacts with PPP1CA.

Its subcellular location is the cell projection. The protein resides in the cilium. It localises to the cytoplasm. It is found in the cytoskeleton. The protein localises to the flagellum axoneme. This Homo sapiens (Human) protein is Stabilizer of axonemal microtubules 4.